Consider the following 545-residue polypeptide: Chaperonin GroEL (545 aa).

Residues 29–32, lysine 50, 86–90, glycine 414, 477–479, and aspartate 493 contribute to the ATP site; these read TMGP, DGTTT, and NAA.

This sequence belongs to the chaperonin (HSP60) family. As to quaternary structure, forms a cylinder of 14 subunits composed of two heptameric rings stacked back-to-back. Interacts with the co-chaperonin GroES.

The protein localises to the cytoplasm. The catalysed reaction is ATP + H2O + a folded polypeptide = ADP + phosphate + an unfolded polypeptide.. Together with its co-chaperonin GroES, plays an essential role in assisting protein folding. The GroEL-GroES system forms a nano-cage that allows encapsulation of the non-native substrate proteins and provides a physical environment optimized to promote and accelerate protein folding. The chain is Chaperonin GroEL from Campylobacter fetus subsp. fetus (strain 82-40).